A 371-amino-acid chain; its full sequence is Phospho-N-acetylmuramoyl-pentapeptide-transferase (371 aa).

Helical transmembrane passes span leucine 19 to glycine 39, isoleucine 48 to proline 68, threonine 95 to alanine 115, asparagine 119 to phenylalanine 139, alanine 155 to leucine 175, isoleucine 180 to isoleucine 200, alanine 227 to phenylalanine 247, alanine 284 to valine 304, and valine 349 to alanine 369.

This sequence belongs to the glycosyltransferase 4 family. MraY subfamily. Mg(2+) serves as cofactor.

It localises to the cell inner membrane. The catalysed reaction is UDP-N-acetyl-alpha-D-muramoyl-L-alanyl-gamma-D-glutamyl-meso-2,6-diaminopimeloyl-D-alanyl-D-alanine + di-trans,octa-cis-undecaprenyl phosphate = di-trans,octa-cis-undecaprenyl diphospho-N-acetyl-alpha-D-muramoyl-L-alanyl-D-glutamyl-meso-2,6-diaminopimeloyl-D-alanyl-D-alanine + UMP. It participates in cell wall biogenesis; peptidoglycan biosynthesis. Catalyzes the initial step of the lipid cycle reactions in the biosynthesis of the cell wall peptidoglycan: transfers peptidoglycan precursor phospho-MurNAc-pentapeptide from UDP-MurNAc-pentapeptide onto the lipid carrier undecaprenyl phosphate, yielding undecaprenyl-pyrophosphoryl-MurNAc-pentapeptide, known as lipid I. The chain is Phospho-N-acetylmuramoyl-pentapeptide-transferase from Acaryochloris marina (strain MBIC 11017).